We begin with the raw amino-acid sequence, 186 residues long: Peptidyl-tRNA hydrolase (186 aa).

TRNA is bound at residue tyrosine 14. The active-site Proton acceptor is histidine 19. TRNA contacts are provided by tyrosine 61, asparagine 63, and asparagine 107.

The protein belongs to the PTH family. Monomer.

It is found in the cytoplasm. The catalysed reaction is an N-acyl-L-alpha-aminoacyl-tRNA + H2O = an N-acyl-L-amino acid + a tRNA + H(+). In terms of biological role, hydrolyzes ribosome-free peptidyl-tRNAs (with 1 or more amino acids incorporated), which drop off the ribosome during protein synthesis, or as a result of ribosome stalling. Catalyzes the release of premature peptidyl moieties from peptidyl-tRNA molecules trapped in stalled 50S ribosomal subunits, and thus maintains levels of free tRNAs and 50S ribosomes. The chain is Peptidyl-tRNA hydrolase from Helicobacter pylori (strain P12).